A 478-amino-acid polypeptide reads, in one-letter code: Receptor-interacting serine/threonine-protein kinase 3 (478 aa).

Ser-2 bears the Phosphoserine mark. One can recognise a Protein kinase domain in the interval 22–290; that stretch reads LENLGFVGKG…CESKTNNVYI (269 aa). Residues 28-36 and Lys-51 each bind ATP; that span reads VGKGGFGAV. Asp-143 acts as the Proton acceptor in catalysis. Phosphoserine is present on Ser-165. Residue Thr-185 is modified to Phosphothreonine. A Phosphoserine; by autocatalysis modification is found at Ser-201. At Thr-228 the chain carries Phosphothreonine. At Ser-229 the chain carries Phosphoserine; by autocatalysis. Thr-254 carries the post-translational modification Phosphothreonine. Residues Ser-301 and Ser-323 each carry the phosphoserine modification. Residues 311-330 form a disordered region; sequence RSSDTKLSARESSQKGTEVD. Over residues 313–330 the composition is skewed to basic and acidic residues; it reads SDTKLSARESSQKGTEVD. Thr-335 is subject to Phosphothreonine. Phosphoserine is present on residues Ser-350, Ser-369, and Ser-380. Positions 362 to 429 are disordered; the sequence is ERRGKEASFG…RNSNPWYTWN (68 aa). Residues 376-385 show a composition bias toward polar residues; it reads AGTSSDTLAG. Thr-392 is subject to Phosphothreonine. Residues 413–429 show a composition bias toward polar residues; sequence QRNQGDGRNSNPWYTWN. The RIP homotypic interaction motif (RHIM) motif lies at 437–461; it reads LQSIVLNNCSEVQIGQHNCMSVQPR. Arg-474 is modified (omega-N-methylarginine).

Belongs to the protein kinase superfamily. TKL Ser/Thr protein kinase family. In terms of assembly, interacts (via RIP homotypic interaction motif) with RIPK1 (via RIP homotypic interaction motif); this interaction induces RIPK1 phosphorylation and formation of a RIPK1-RIPK3 necrosis-inducing complex. Interacts with MLKL; the interaction is direct and triggers necroptosis. Interacts with ZBP1 (via RIP homotypic interaction motif); interaction with ZBP1 activates RIPK3, triggering necroptosis. Upon TNF-induced necrosis, the RIPK1-RIPK3 dimer further interacts with PGAM5 and MLKL; the formation of this complex leads to PGAM5 phosphorylation and increase in PGAM5 phosphatase activity. Binds TRAF2 and is recruited to the TNFR-1 signaling complex. Interacts with PYGL, GLUL and GLUD1; these interactions result in activation of these metabolic enzymes. Interacts with BIRC2/c-IAP1, BIRC3/c-IAP2 and XIAP/BIRC4. Interacts with ARHGEF2. Interacts with PELI1 (via atypical FHA domain); the phosphorylated form at Thr-185 binds preferentially to PELI1. Interacts with BUB1B, TRAF2 and STUB1. Interacts with CASP6. Component of the AIM2 PANoptosome complex, a multiprotein complex that drives inflammatory cell death (PANoptosis). In terms of processing, RIPK1 and RIPK3 undergo reciprocal auto- and trans-phosphorylation. Autophosphorylated following interaction with ZBP1. Phosphorylation of Ser-201 plays a role in the necroptotic function of RIPK3. Autophosphorylates at Thr-228 and Ser-229 following activation by ZBP1: phosphorylation at these sites is a hallmark of necroptosis and is required for binding MLKL. Phosphorylation at Thr-185 is important for its kinase activity, interaction with PELI1 and for its ability to mediate TNF-induced necroptosis. Polyubiquitinated with 'Lys-48' and 'Lys-63'-linked chains by BIRC2/c-IAP1 and BIRC3/c-IAP2, leading to activation of NF-kappa-B. Ubiquitinated by STUB1 leading to its subsequent proteasome-dependent degradation.

Its subcellular location is the cytoplasm. It is found in the cytosol. It localises to the nucleus. It catalyses the reaction L-seryl-[protein] + ATP = O-phospho-L-seryl-[protein] + ADP + H(+). It carries out the reaction L-threonyl-[protein] + ATP = O-phospho-L-threonyl-[protein] + ADP + H(+). With respect to regulation, activity is stimulated by ZBP1, which senses double-stranded Z-RNA structures. RIPK3-dependent necroptosis is inhibited by RIPK1: RIPK1 prevents the ZBP1-induced activation of RIPK3 via FADD-mediated recruitment of CASP8, which cleaves RIPK1 and limits TNF-induced necroptosis. Functionally, serine/threonine-protein kinase that activates necroptosis and apoptosis, two parallel forms of cell death. Necroptosis, a programmed cell death process in response to death-inducing TNF-alpha family members, is triggered by RIPK3 following activation by ZBP1. Activated RIPK3 forms a necrosis-inducing complex and mediates phosphorylation of MLKL, promoting MLKL localization to the plasma membrane and execution of programmed necrosis characterized by calcium influx and plasma membrane damage. In addition to TNF-induced necroptosis, necroptosis can also take place in the nucleus in response to orthomyxoviruses infection: following ZBP1 activation, which senses double-stranded Z-RNA structures, nuclear RIPK3 catalyzes phosphorylation and activation of MLKL, promoting disruption of the nuclear envelope and leakage of cellular DNA into the cytosol. Also regulates apoptosis: apoptosis depends on RIPK1, FADD and CASP8, and is independent of MLKL and RIPK3 kinase activity. Phosphorylates RIPK1: RIPK1 and RIPK3 undergo reciprocal auto- and trans-phosphorylation. In some cell types, also able to restrict viral replication by promoting cell death-independent responses. In response to flavivirus infection in neurons, promotes a cell death-independent pathway that restricts viral replication: together with ZBP1, promotes a death-independent transcriptional program that modifies the cellular metabolism via up-regulation expression of the enzyme ACOD1/IRG1 and production of the metabolite itaconate. Itaconate inhibits the activity of succinate dehydrogenase, generating a metabolic state in neurons that suppresses replication of viral genomes. RIPK3 binds to and enhances the activity of three metabolic enzymes: GLUL, GLUD1, and PYGL. These metabolic enzymes may eventually stimulate the tricarboxylic acid cycle and oxidative phosphorylation, which could result in enhanced ROS production. This Rattus norvegicus (Rat) protein is Receptor-interacting serine/threonine-protein kinase 3.